The primary structure comprises 86 residues: Omega-theraphotoxin-Hhn1e (86 aa).

A signal peptide spans 1–21 (MKSIVFVALFGLALLAVVCSA). Residues 22–50 (SEGAHKELLKEVVRAMVVDKTDAVQAEER) constitute a propeptide that is removed on maturation. Cystine bridges form between C52/C66 and C65/C78.

Belongs to the neurotoxin 10 (Hwtx-1) family. 17 (Hntx-9) subfamily. As to expression, expressed by the venom gland.

The protein localises to the secreted. Ion channel inhibitor. The protein is Omega-theraphotoxin-Hhn1e of Cyriopagopus hainanus (Chinese bird spider).